The primary structure comprises 300 residues: Haloalkane dehalogenase (300 aa).

Positions 32-155 constitute an AB hydrolase-1 domain; it reads AIVFQHGNPT…PAVRGVFQGF (124 aa). Catalysis depends on aspartate 109, which acts as the Nucleophile. Residue glutamate 133 is the Proton donor of the active site. The active-site Proton acceptor is histidine 273.

Belongs to the haloalkane dehalogenase family. Type 2 subfamily. In terms of assembly, monomer.

The enzyme catalyses 1-haloalkane + H2O = a halide anion + a primary alcohol + H(+). In terms of biological role, catalyzes hydrolytic cleavage of carbon-halogen bonds in halogenated aliphatic compounds, leading to the formation of the corresponding primary alcohols, halide ions and protons. The protein is Haloalkane dehalogenase of Mycobacterium bovis (strain BCG / Pasteur 1173P2).